Here is a 380-residue protein sequence, read N- to C-terminus: L-lactate dehydrogenase (380 aa).

The 380-residue stretch at 1 to 380 (MIISSTTDFR…DRSILAKTDR (380 aa)) folds into the FMN hydroxy acid dehydrogenase domain. Residue Tyr-24 participates in substrate binding. Residues Ser-106 and Gln-127 each contribute to the FMN site. Tyr-129 contacts substrate. FMN is bound at residue Thr-155. Position 164 (Arg-164) interacts with substrate. Lys-251 provides a ligand contact to FMN. The active-site Proton acceptor is His-275. Arg-278 serves as a coordination point for substrate. Residue 306-330 (DGGVRSGLDVVRMLALGAKGVLLGR) coordinates FMN.

Belongs to the FMN-dependent alpha-hydroxy acid dehydrogenase family. The cofactor is FMN.

It localises to the cell inner membrane. It carries out the reaction (S)-lactate + A = pyruvate + AH2. Functionally, catalyzes the conversion of L-lactate to pyruvate. Is coupled to the respiratory chain. The protein is L-lactate dehydrogenase of Caulobacter sp. (strain K31).